The chain runs to 363 residues: DNA repair protein rlp1 (363 aa).

The protein belongs to the RecA family. RAD51 subfamily. In terms of assembly, interacts with rdl1 and sws1.

The protein localises to the cytoplasm. The protein resides in the nucleus. Functionally, required for normal levels of meiotic recombination. Acts in the recombinational pathway of double-strand break (DSB) repair together with rhp51, rhp55 and rad22. Required for the full extent of DNA recombination and cell survival under condition of a replication fork collapse. This is DNA repair protein rlp1 from Schizosaccharomyces pombe (strain 972 / ATCC 24843) (Fission yeast).